A 309-amino-acid polypeptide reads, in one-letter code: Prepilin leader peptidase/N-methyltransferase (309 aa).

A helical transmembrane segment spans residues Met35–Val55. Residues Cys96, Cys99, Cys121, and Cys124 each coordinate Zn(2+). A run of 6 helical transmembrane segments spans residues Leu147 to Leu167, Leu183 to Leu203, Val207 to Leu227, Ile230 to Trp250, Leu253 to Trp273, and Phe288 to Gly308.

This sequence belongs to the peptidase A24 family. It depends on Zn(2+) as a cofactor.

Its subcellular location is the cell inner membrane. The catalysed reaction is Typically cleaves a -Gly-|-Phe- bond to release an N-terminal, basic peptide of 5-8 residues from type IV prepilin, and then N-methylates the new N-terminal amino group, the methyl donor being S-adenosyl-L-methionine.. Plays an essential role in type IV pili and type II pseudopili formation by proteolytically removing the leader sequence from substrate proteins and subsequently monomethylating the alpha-amino group of the newly exposed N-terminal phenylalanine. The protein is Prepilin leader peptidase/N-methyltransferase (gspO) of Burkholderia pseudomallei (strain K96243).